The primary structure comprises 130 residues: uncharacterized protein (130 aa).

This is an uncharacterized protein from Sputnik virophage.